The sequence spans 463 residues: ATP synthase subunit beta (463 aa).

152-159 (GGAGVGKT) is an ATP binding site.

Belongs to the ATPase alpha/beta chains family. As to quaternary structure, F-type ATPases have 2 components, CF(1) - the catalytic core - and CF(0) - the membrane proton channel. CF(1) has five subunits: alpha(3), beta(3), gamma(1), delta(1), epsilon(1). CF(0) has three main subunits: a(1), b(2) and c(9-12). The alpha and beta chains form an alternating ring which encloses part of the gamma chain. CF(1) is attached to CF(0) by a central stalk formed by the gamma and epsilon chains, while a peripheral stalk is formed by the delta and b chains.

It localises to the cell membrane. The enzyme catalyses ATP + H2O + 4 H(+)(in) = ADP + phosphate + 5 H(+)(out). Its function is as follows. Produces ATP from ADP in the presence of a proton gradient across the membrane. The catalytic sites are hosted primarily by the beta subunits. In Clostridium botulinum (strain Alaska E43 / Type E3), this protein is ATP synthase subunit beta.